The primary structure comprises 157 residues: Endoribonuclease YbeY (157 aa).

Zn(2+) contacts are provided by histidine 112, histidine 116, and histidine 122.

Belongs to the endoribonuclease YbeY family. Requires Zn(2+) as cofactor.

Its subcellular location is the cytoplasm. Single strand-specific metallo-endoribonuclease involved in late-stage 70S ribosome quality control and in maturation of the 3' terminus of the 16S rRNA. This Marinobacter nauticus (strain ATCC 700491 / DSM 11845 / VT8) (Marinobacter aquaeolei) protein is Endoribonuclease YbeY.